We begin with the raw amino-acid sequence, 215 residues long: Adenylate kinase (215 aa).

Residue 10–15 (GAGKGT) participates in ATP binding. Residues 30-59 (STGDMLRAAVKAGTPIGLKAKAVMEAGELV) are NMP. AMP-binding positions include T31, R36, 57–59 (ELV), 85–88 (GYPR), and Q92. Residues 126-163 (GRYTCANCGEGYHDRFKQPKVAGVCDVCGSAEFKRRPD) form an LID region. Residue R127 coordinates ATP. Residues C130, C133, C150, and C153 each coordinate Zn(2+). 2 residues coordinate AMP: R160 and R172. A200 lines the ATP pocket.

This sequence belongs to the adenylate kinase family. As to quaternary structure, monomer.

It localises to the cytoplasm. The enzyme catalyses AMP + ATP = 2 ADP. Its pathway is purine metabolism; AMP biosynthesis via salvage pathway; AMP from ADP: step 1/1. Its function is as follows. Catalyzes the reversible transfer of the terminal phosphate group between ATP and AMP. Plays an important role in cellular energy homeostasis and in adenine nucleotide metabolism. The chain is Adenylate kinase from Rhizorhabdus wittichii (strain DSM 6014 / CCUG 31198 / JCM 15750 / NBRC 105917 / EY 4224 / RW1) (Sphingomonas wittichii).